A 152-amino-acid chain; its full sequence is Ubiquitin-conjugating enzyme E2 2 (152 aa).

A UBC core domain is found at 4–150 (PARKRLMRDF…VREVVEQSWT (147 aa)). C88 serves as the catalytic Glycyl thioester intermediate.

The protein belongs to the ubiquitin-conjugating enzyme family.

It catalyses the reaction S-ubiquitinyl-[E1 ubiquitin-activating enzyme]-L-cysteine + [E2 ubiquitin-conjugating enzyme]-L-cysteine = [E1 ubiquitin-activating enzyme]-L-cysteine + S-ubiquitinyl-[E2 ubiquitin-conjugating enzyme]-L-cysteine.. Its pathway is protein modification; protein ubiquitination. Catalyzes the covalent attachment of ubiquitin to other proteins. This chain is Ubiquitin-conjugating enzyme E2 2 (UBC2), found in Triticum aestivum (Wheat).